A 298-amino-acid chain; its full sequence is ADP/ATP translocase 2 (298 aa).

Residue Met1 is modified to N-acetylmethionine. The Mitochondrial intermembrane segment spans residues 1-7; that stretch reads MTDAAVS. At Thr2 the chain carries N-acetylthreonine; in ADP/ATP translocase 2, N-terminally processed. One copy of the Solcar 1 repeat lies at 6–98; the sequence is VSFAKDFLAG…FAFKDKYKQI (93 aa). Ser7 bears the Phosphoserine mark. Residues 8 to 37 form a helical membrane-spanning segment; the sequence is FAKDFLAGGVAAAISKTAVAPIERVKLLLQ. Lys23 is subject to N6-malonyllysine. The Mitochondrial matrix segment spans residues 38–74; that stretch reads VQHASKQITADKQYKGIIDCVVRIPKEQGVLSFWRGN. The residue at position 43 (Lys43) is an N6-succinyllysine. An N6,N6,N6-trimethyllysine; alternate modification is found at Lys52. Lys52 carries the N6,N6-dimethyllysine; alternate modification. N6-methyllysine; alternate is present on Lys52. Residues 75–99 traverse the membrane as a helical segment; the sequence is LANVIRYFPTQALNFAFKDKYKQIF. Positions 80 and 92 each coordinate ADP. N6-malonyllysine occurs at positions 92 and 96. Residues 100–109 are Mitochondrial intermembrane-facing; sequence LGGVDKRTQF. Residue Lys105 is modified to N6-acetyllysine; alternate. Lys105 carries the post-translational modification N6-succinyllysine; alternate. Residues 110 to 130 traverse the membrane as a helical segment; the sequence is WRYFAGNLASGGAAGATSLCF. Solcar repeat units follow at residues 111-201 and 212-297; these read RYFA…AKGM and ISWM…IKKF. At 131 to 178 the chain is on the mitochondrial matrix side; that stretch reads VYPLDFARTRLAADVGKAGAEREFRGLGDCLVKIYKSDGIRGLYQGFN. Lys147 is subject to N6-methyllysine; alternate. The residue at position 147 (Lys147) is an N6-acetyllysine; alternate. Lys147 is modified (N6-succinyllysine; alternate). Residue Lys147 is modified to N6-malonyllysine; alternate. N6-acetyllysine is present on residues Lys163 and Lys166. A helical membrane pass occupies residues 179–199; sequence VSVQGIIIYRAAYFGIYDTAK. Residues 200–210 lie on the Mitochondrial intermembrane side of the membrane; the sequence is GMLPDPKNTHI. Residues 211 to 231 form a helical membrane-spanning segment; that stretch reads FISWMIAQSVTAVAGLTSYPF. Topologically, residues 232–273 are mitochondrial matrix; sequence DTVRRRMMMQSGRKGTDIMYTGTLDCWRKIARDEGAKAFFKG. Residue Arg235 coordinates ADP. Residues 235-240 are important for transport activity; the sequence is RRRMMM. The Nucleotide carrier signature motif motif lies at 235-240; sequence RRRMMM. The residue at position 268 (Lys268) is an N6-acetyllysine; alternate. N6-succinyllysine; alternate is present on Lys268. The helical transmembrane segment at 274-291 threads the bilayer; it reads AWSNVLRGMGGAFVLVLY. The Mitochondrial intermembrane segment spans residues 292-298; sequence DEIKKFT.

This sequence belongs to the mitochondrial carrier (TC 2.A.29) family. In terms of assembly, monomer. Component of the MMXD complex, which includes CIAO1, ERCC2, CIAO2B, MMS19 and SLC25A5/ANT2. Interacts with AK4. Interacts with TIMM44; leading to inhibit the presequence translocase TIMM23, thereby promoting stabilization of PINK1. Trimethylated by ANTKMT at Lys-52.

It localises to the mitochondrion inner membrane. It is found in the membrane. It carries out the reaction ADP(in) + ATP(out) = ADP(out) + ATP(in). The catalysed reaction is H(+)(in) = H(+)(out). With respect to regulation, the matrix-open state (m-state) is inhibited by the membrane-permeable bongkrekic acid (BKA). The cytoplasmic-open state (c-state) is inhibited by the membrane-impermeable toxic inhibitor carboxyatractyloside (CATR). Proton transporter activity is inhibited by ADP:ATP antiporter activity. Its function is as follows. ADP:ATP antiporter that mediates import of ADP into the mitochondrial matrix for ATP synthesis, and export of ATP out to fuel the cell. Cycles between the cytoplasmic-open state (c-state) and the matrix-open state (m-state): operates by the alternating access mechanism with a single substrate-binding site intermittently exposed to either the cytosolic (c-state) or matrix (m-state) side of the inner mitochondrial membrane. In addition to its ADP:ATP antiporter activity, also involved in mitochondrial uncoupling and mitochondrial permeability transition pore (mPTP) activity. Plays a role in mitochondrial uncoupling by acting as a proton transporter: proton transport uncouples the proton flows via the electron transport chain and ATP synthase to reduce the efficiency of ATP production and cause mitochondrial thermogenesis. Proton transporter activity is inhibited by ADP:ATP antiporter activity, suggesting that SLC25A5/ANT2 acts as a master regulator of mitochondrial energy output by maintaining a delicate balance between ATP production (ADP:ATP antiporter activity) and thermogenesis (proton transporter activity). Proton transporter activity requires free fatty acids as cofactor, but does not transport it. Probably mediates mitochondrial uncoupling in tissues that do not express UCP1. Also plays a key role in mPTP opening, a non-specific pore that enables free passage of the mitochondrial membranes to solutes of up to 1.5 kDa, and which contributes to cell death. It is however unclear if SLC25A5/ANT2 constitutes a pore-forming component of mPTP or regulates it. Acts as a regulator of mitophagy independently of ADP:ATP antiporter activity: promotes mitophagy via interaction with TIMM44, leading to inhibit the presequence translocase TIMM23, thereby promoting stabilization of PINK1. As part of the mitotic spindle-associated MMXD complex it may play a role in chromosome segregation. The chain is ADP/ATP translocase 2 from Bos taurus (Bovine).